A 109-amino-acid chain; its full sequence is Small ribosomal subunit protein uS17 (109 aa).

The protein belongs to the universal ribosomal protein uS17 family. In terms of assembly, part of the 30S ribosomal subunit.

One of the primary rRNA binding proteins, it binds specifically to the 5'-end of 16S ribosomal RNA. The polypeptide is Small ribosomal subunit protein uS17 (Methanococcus maripaludis (strain DSM 14266 / JCM 13030 / NBRC 101832 / S2 / LL)).